Consider the following 343-residue polypeptide: tRNA-specific 2-thiouridylase MnmA (343 aa).

Residues 7–14 and Met-33 contribute to the ATP site; that span reads ALSGGVDS. The active-site Nucleophile is Cys-87. Cysteines 87 and 184 form a disulfide. Position 111 (Gly-111) interacts with ATP. The tract at residues 135–137 is interaction with tRNA; it reads KDQ. The active-site Cysteine persulfide intermediate is the Cys-184. Residues 289–290 are interaction with tRNA; it reads RY.

Belongs to the MnmA/TRMU family.

The protein localises to the cytoplasm. The catalysed reaction is S-sulfanyl-L-cysteinyl-[protein] + uridine(34) in tRNA + AH2 + ATP = 2-thiouridine(34) in tRNA + L-cysteinyl-[protein] + A + AMP + diphosphate + H(+). In terms of biological role, catalyzes the 2-thiolation of uridine at the wobble position (U34) of tRNA, leading to the formation of s(2)U34. This is tRNA-specific 2-thiouridylase MnmA from Desulforudis audaxviator (strain MP104C).